Reading from the N-terminus, the 91-residue chain is DNA-directed RNA polymerase subunit Rpo5 (91 aa).

This sequence belongs to the archaeal Rpo5/eukaryotic RPB5 RNA polymerase subunit family. Part of the RNA polymerase complex.

Its subcellular location is the cytoplasm. It catalyses the reaction RNA(n) + a ribonucleoside 5'-triphosphate = RNA(n+1) + diphosphate. In terms of biological role, DNA-dependent RNA polymerase (RNAP) catalyzes the transcription of DNA into RNA using the four ribonucleoside triphosphates as substrates. In Staphylothermus marinus (strain ATCC 43588 / DSM 3639 / JCM 9404 / F1), this protein is DNA-directed RNA polymerase subunit Rpo5.